The following is a 204-amino-acid chain: Late expression factor 2 (204 aa).

The protein belongs to the baculoviridae LEF-2 family.

Functionally, required for late and very late gene expression. Specifically required for expression from the vp39 and polh promoters. This chain is Late expression factor 2 (LEF-2), found in Orgyia pseudotsugata (Douglas-fir tussock moth).